We begin with the raw amino-acid sequence, 625 residues long: UvrABC system protein C (625 aa).

The region spanning 13–92 is the GIY-YIG domain; that stretch reads DKPGVYIMKD…IKKHRPKFNI (80 aa). Positions 204–239 constitute a UVR domain; it reads EDIIKKLEKDMKEAADNLEFERAARIRDKINSLKHI.

This sequence belongs to the UvrC family. In terms of assembly, interacts with UvrB in an incision complex.

It localises to the cytoplasm. In terms of biological role, the UvrABC repair system catalyzes the recognition and processing of DNA lesions. UvrC both incises the 5' and 3' sides of the lesion. The N-terminal half is responsible for the 3' incision and the C-terminal half is responsible for the 5' incision. The chain is UvrABC system protein C from Acetivibrio thermocellus (strain ATCC 27405 / DSM 1237 / JCM 9322 / NBRC 103400 / NCIMB 10682 / NRRL B-4536 / VPI 7372) (Clostridium thermocellum).